We begin with the raw amino-acid sequence, 238 residues long: uncharacterized protein (238 aa).

Residues 3–116 enclose the Response regulatory domain; sequence RVIIVDDEQP…RLAKTLTRLS (114 aa). Asp-54 is subject to 4-aspartylphosphate. Residues 136–237 enclose the HTH LytTR-type domain; the sequence is IPCSGHNRIF…LKSLKEKLGI (102 aa).

This is an uncharacterized protein from Yersinia pestis.